Here is a 509-residue protein sequence, read N- to C-terminus: Phytase A (509 aa).

An N-terminal signal peptide occupies residues 1-15; it reads MFLLMVPLFSYLAAA. Cys-27 and Cys-36 are oxidised to a cystine. 1D-myo-inositol hexakisphosphate is bound by residues Gln-46, Tyr-47, Arg-75, His-76, Arg-79, Thr-82, and Arg-164. 4 disulfides stabilise this stretch: Cys-65–Cys-444, Cys-216–Cys-507, Cys-266–Cys-295, and Cys-478–Cys-486. The Nucleophile role is filled by His-76. 2 N-linked (GlcNAc...) asparagine glycosylation sites follow: Asn-171 and Asn-208. Lys-314 serves as a coordination point for 1D-myo-inositol hexakisphosphate. 3 N-linked (GlcNAc...) asparagine glycosylation sites follow: Asn-348, Asn-352, and Asn-367. Residues His-376 and Asp-377 each contribute to the 1D-myo-inositol hexakisphosphate site. Residue Asn-401 is glycosylated (N-linked (GlcNAc...) asparagine).

Belongs to the histidine acid phosphatase family. In terms of assembly, monomer.

The protein resides in the secreted. The enzyme catalyses 1D-myo-inositol hexakisphosphate + H2O = 1D-myo-inositol 1,2,4,5,6-pentakisphosphate + phosphate. It carries out the reaction 1D-myo-inositol 1,2,4,5,6-pentakisphosphate + H2O = 1D-myo-inositol 1,2,5,6-tetrakisphosphate + phosphate. The catalysed reaction is 1D-myo-inositol 1,2,5,6-tetrakisphosphate + H2O = 1D-myo-inositol 1,2,6-trisphosphate + phosphate. It catalyses the reaction 1D-myo-inositol 1,2,6-trisphosphate + H2O = 1D-myo-inositol 1,2-bisphosphate + phosphate. The enzyme catalyses 1D-myo-inositol 1,2-bisphosphate + H2O = 1D-myo-inositol 2-phosphate + phosphate. Catalyzes the phosphate monoester hydrolysis of phytic acid (myo-inositol hexakisphosphate), which results in the stepwise formation of myo-inositol pentakis-, tetrakis-, tris-, bis-, and monophosphates, as well as the liberation of inorganic phosphate. Myo-inositol 2-monophosphate is the end product. Is also able to dephosphorylate the classic acid phosphatase substrate p-nitrophenyl phosphate. This Neurospora crassa (strain ATCC 24698 / 74-OR23-1A / CBS 708.71 / DSM 1257 / FGSC 987) protein is Phytase A (pht-1).